A 219-amino-acid polypeptide reads, in one-letter code: Melanoma-associated antigen H1 (219 aa).

Positions 1 to 13 are enriched in basic residues; the sequence is MPRGRKSRRRRNA. Residues 1–84 form a disordered region; the sequence is MPRGRKSRRR…QKPSVPRSNF (84 aa). Residues 1 to 198 enclose the MAGE domain; sequence MPRGRKSRRR…KDWPCNYDWD (198 aa). Over residues 44 to 57 the composition is skewed to acidic residues; that stretch reads PEDDLSGPEEDPST. Positions 58–74 are enriched in low complexity; it reads PEEASTTPEEASSTAQA. Tyrosine 195 is subject to Phosphotyrosine.

The protein is Melanoma-associated antigen H1 (MAGEH1) of Homo sapiens (Human).